Consider the following 147-residue polypeptide: MARPTKFRRVEFFPEDNYFVPWGKPKCQIEEMVLKVEELEAMRLKDIEKLNQEECAQKMEVSRQTFQNIIDSARNKVAIALTEGKAIKISGGNYTTKLCKYRCLDCENIYEINYKQDRDTCPACGSEKIVCSRKADFCRRWCKGHNK.

The protein belongs to the UPF0251 family.

This Clostridium tetani (strain Massachusetts / E88) protein is UPF0251 protein CTC_01373.